A 320-amino-acid chain; its full sequence is uncharacterized protein (320 aa).

It belongs to the NAD(P)-dependent epimerase/dehydratase family.

This is an uncharacterized protein from Staphylococcus saprophyticus subsp. saprophyticus (strain ATCC 15305 / DSM 20229 / NCIMB 8711 / NCTC 7292 / S-41).